A 1579-amino-acid polypeptide reads, in one-letter code: Eukaryotic translation initiation factor 4 gamma 3 (1579 aa).

2 disordered regions span residues 1–35 and 128–326; these read MNSQPQARSPFFQRPQIQPPRAAIPNSSPSIRPGV and TQQQ…GPSL. Residues 10-25 are compositionally biased toward low complexity; it reads PFFQRPQIQPPRAAIP. Residues 26-35 show a composition bias toward polar residues; the sequence is NSSPSIRPGV. The PABPC1-binding stretch occupies residues 134–162; that stretch reads PAKREKKTIRIRDPNQGGKDITEEIMSGG. Residues 167-183 show a composition bias toward pro residues; the sequence is PTPPIGRPASTPTPPQQ. Position 168 is a phosphothreonine (T168). A phosphoserine mark is found at S230, S232, and S267. Residues 266-292 are compositionally biased toward low complexity; it reads SSPTSLPPLARSSLPSPMSAALSSQPL. Over residues 295-308 the composition is skewed to basic and acidic residues; sequence AEDKCELPSSKEED. Polar residues predominate over residues 315-326; that stretch reads PTSCTAASGPSL. 4 positions are modified to phosphoserine: S436, S470, S472, and S490. Basic and acidic residues predominate over residues 454 to 470; sequence RTCLSKDAKEMQDKAES. Disordered stretches follow at residues 454–615, 681–706, and 724–744; these read RTCL…DTEG, RQTPGGRGVPLLNVGPRRSQPGQRRE, and AENAWKPSQKRDSHADDPESI. Acidic residues predominate over residues 471–480; it reads ESDGQAEETA. Over residues 481–501 the composition is skewed to polar residues; sequence DPQSLHSGRSPAPVQTATTAP. Composition is skewed to basic and acidic residues over residues 506–515 and 549–563; these read KTKEQTRTPD and SERDPSALKRGKAEE. Residues 589-598 are compositionally biased toward low complexity; it reads SGSADSSADG. A compositionally biased stretch (basic and acidic residues) spans 606-615; sequence ESWKPADTEG. Positions 614-625 are EIF4E-binding; the sequence is EGKKQYDREFLL. The tract at residues 694-1014 is eIF3/EIF4A-binding; it reads VGPRRSQPGQ…EQRKVQQLMT (321 aa). 5 HEAT repeats span residues 740-778, 779-826, 827-900, 901-939, and 940-979; these read DPESIKTQELFRKVRSILNKLTPQMFNQLMKQVSALTVD, TEER…GNTV, NFRK…LKML, TEAIMHDCVVKLLKNHDEESLECLCRLLTTIGKDLDFEK, and AKPRMDQYFNQMEKIVKERKTSSRIRFMLQDVIDLRLCNW. Residues 750-978 enclose the MIF4G domain; sequence FRKVRSILNK…QDVIDLRLCN (229 aa). Positions 855–871 are enriched in basic and acidic residues; the sequence is KELEAASAPEERTRLHD. Positions 855–875 are disordered; it reads KELEAASAPEERTRLHDELEE. Residues 989 to 1018 are a coiled coil; it reads KTIEQIHKEAKIEEQEEQRKVQQLMTKEKR. Disordered stretches follow at residues 1009 to 1037 and 1067 to 1214; these read VQQLMTKEKRRPGVQRVDEGGWNTVQGAK and LGSW…LSEE. Positions 1086–1098 are enriched in low complexity; sequence LRSSASSLNRFSP. A Phosphoserine; by CaMK1 modification is found at S1150. 2 stretches are compositionally biased toward basic and acidic residues: residues 1150 to 1169 and 1179 to 1197; these read SSKDLLDNQSQEEQRREMLE and DAERASTEADRSKTRELAK. Positions 1154–1176 form a coiled coil; it reads LLDNQSQEEQRREMLETVKQLTG. At S1212 the chain carries Phosphoserine. The region spanning 1215-1337 is the MI domain; it reads EVERKSKSII…SMRELIVEFS (123 aa). A coiled-coil region spans residues 1406 to 1438; it reads SSEALSKKELSAEELSQRLEKLIMEEKADDERI. The region spanning 1410–1579 is the W2 domain; it reads LSKKELSAEE…REAEEESEDN (170 aa). An EIF4A-binding region spans residues 1427 to 1579; that stretch reads LIMEEKADDE…REAEEESEDN (153 aa). Positions 1565–1579 are necessary but not sufficient for MKNK1-binding; the sequence is FFTWLREAEEESEDN.

It belongs to the eukaryotic initiation factor 4G family. Interacts with EIF4A, EIF4E, eIF3 and PABPC1. Part of a complex with EIF4E. eIF4F is a multi-subunit complex, the composition of which varies with external and internal environmental conditions. It is composed of at least EIF4A, EIF4E and EIF4G1/EIF4G3. EIF4G1/EIF4G3 interacts through its C-terminus with the serine/threonine kinases MKNK1, and with MKNK2. Appears to act as a scaffold protein, holding these enzymes in place to phosphorylate eIF4E. Non-phosphorylated EIF4EBP1 competes with EIF4G1/EIFG3 to interact with EIF4E; insulin stimulated MAP-kinase (MAPK1 and MAPK3) phosphorylation of EIF4EBP1 causes dissociation of the complex allowing EIF4G1/EIF4G3 to bind and consequent initiation of translation. EIF4G1/EIF4G3 interacts with PABPC1 to bring about circularization of the mRNA. Interacts with FXR1; promoting translation of FXR1 target mRNAs.

Its function is as follows. Component of the protein complex eIF4F, which is involved in the recognition of the mRNA cap, ATP-dependent unwinding of 5'-terminal secondary structure and recruitment of mRNA to the ribosome. Functional homolog of EIF4G1. The chain is Eukaryotic translation initiation factor 4 gamma 3 (Eif4g3) from Mus musculus (Mouse).